Reading from the N-terminus, the 23-residue chain is Acetylcholine receptor subunit gamma (23 aa).

Belongs to the ligand-gated ion channel (TC 1.A.9) family. Acetylcholine receptor (TC 1.A.9.1) subfamily. Gamma/CHRNG sub-subfamily. In terms of assembly, pentamer of two alpha chains, and one each of the beta, delta, and gamma chains.

The protein localises to the postsynaptic cell membrane. It is found in the cell membrane. It carries out the reaction K(+)(in) = K(+)(out). It catalyses the reaction Na(+)(in) = Na(+)(out). In terms of biological role, after binding acetylcholine, the AChR responds by an extensive change in conformation that affects all subunits and leads to opening of an ion-conducting channel across the plasma membrane. This chain is Acetylcholine receptor subunit gamma (chrng), found in Electrophorus electricus (Electric eel).